Consider the following 1165-residue polypeptide: DNA-directed RNA polymerase subunit beta (1165 aa).

It belongs to the RNA polymerase beta chain family. In terms of assembly, the RNAP catalytic core consists of 2 alpha, 1 beta, 1 beta' and 1 omega subunit. When a sigma factor is associated with the core the holoenzyme is formed, which can initiate transcription.

It catalyses the reaction RNA(n) + a ribonucleoside 5'-triphosphate = RNA(n+1) + diphosphate. In terms of biological role, DNA-dependent RNA polymerase catalyzes the transcription of DNA into RNA using the four ribonucleoside triphosphates as substrates. The polypeptide is DNA-directed RNA polymerase subunit beta (Corynebacterium glutamicum (strain R)).